Here is a 399-residue protein sequence, read N- to C-terminus: Chorismate synthase (399 aa).

NADP(+) contacts are provided by Arg40 and Arg46. FMN contacts are provided by residues 135 to 137, 256 to 257, Gly301, 316 to 320, and Arg342; these read RAS, QA, and KPIAT.

It belongs to the chorismate synthase family. As to quaternary structure, homotetramer. FMNH2 serves as cofactor.

It catalyses the reaction 5-O-(1-carboxyvinyl)-3-phosphoshikimate = chorismate + phosphate. Its pathway is metabolic intermediate biosynthesis; chorismate biosynthesis; chorismate from D-erythrose 4-phosphate and phosphoenolpyruvate: step 7/7. Its function is as follows. Catalyzes the anti-1,4-elimination of the C-3 phosphate and the C-6 proR hydrogen from 5-enolpyruvylshikimate-3-phosphate (EPSP) to yield chorismate, which is the branch point compound that serves as the starting substrate for the three terminal pathways of aromatic amino acid biosynthesis. This reaction introduces a second double bond into the aromatic ring system. This is Chorismate synthase from Paenarthrobacter aurescens (strain TC1).